A 187-amino-acid chain; its full sequence is NADH-quinone oxidoreductase subunit B (187 aa).

[4Fe-4S] cluster is bound by residues C46, C47, C112, and C141.

The protein belongs to the complex I 20 kDa subunit family. NDH-1 is composed of 14 different subunits. Subunits NuoB, C, D, E, F, and G constitute the peripheral sector of the complex. The cofactor is [4Fe-4S] cluster.

It is found in the cell inner membrane. The catalysed reaction is a quinone + NADH + 5 H(+)(in) = a quinol + NAD(+) + 4 H(+)(out). NDH-1 shuttles electrons from NADH, via FMN and iron-sulfur (Fe-S) centers, to quinones in the respiratory chain. The immediate electron acceptor for the enzyme in this species is believed to be ubiquinone. Couples the redox reaction to proton translocation (for every two electrons transferred, four hydrogen ions are translocated across the cytoplasmic membrane), and thus conserves the redox energy in a proton gradient. In Myxococcus xanthus (strain DK1622), this protein is NADH-quinone oxidoreductase subunit B.